We begin with the raw amino-acid sequence, 195 residues long: CASP-like protein IN26 (195 aa).

Over 1 to 26 (VAPTGSVETEKAGPSYKPKEYYKVTE) the chain is Cytoplasmic. A helical transmembrane segment spans residues 27 to 47 (AILRLLLLASLVVAVVVMVTS). Residues 48–75 (KETELISVKLDPFPPFMLPLTAKFTQSP) are Extracellular-facing. The helical transmembrane segment at 76–96 (AFIYFVAGLSVAGLYTIISTL) threads the bilayer. Topologically, residues 97-120 (ASFYNLLIKPGFCPALVSHFIILD) are cytoplasmic. A helical membrane pass occupies residues 121-143 (VVMLGIVGTATGAAGGVAYIGLK). Residues 144 to 163 (GNSHVGWTKVCNKYGKLCTH) are Extracellular-facing. Residues 164–184 (LGASLAVSFFAFIVLLLLIIL) form a helical membrane-spanning segment. Residues 185-195 (SIHSLSKKIPK) are Cytoplasmic-facing.

It belongs to the Casparian strip membrane proteins (CASP) family. As to quaternary structure, homodimer and heterodimers.

Its subcellular location is the cell membrane. The polypeptide is CASP-like protein IN26 (IN26) (Ipomoea nil (Japanese morning glory)).